The following is a 1107-amino-acid chain: Enolase-phosphatase E1 (1107 aa).

Aspartate 19 and glutamate 21 together coordinate Mg(2+). Residues 152–153 and lysine 186 contribute to the substrate site; that span reads SS. Aspartate 211 contacts Mg(2+). Residues 258–1107 are disordered; that stretch reads SVKSTETENG…SATPSVETES (850 aa). Basic and acidic residues predominate over residues 260-289; it reads KSTETENGAEKETVTESTEKVADESEKETE. Residues 291–306 show a composition bias toward low complexity; the sequence is ETAAAETENGAEAENG. Residues 366-376 show a composition bias toward acidic residues; the sequence is DAMDVDAEMTD. Basic and acidic residues-rich tracts occupy residues 393–427 and 435–462; these read VTEK…DTKQ and GEDK…KEEE. A compositionally biased stretch (acidic residues) spans 475–485; sequence DKMDVDEEDSA. Basic and acidic residues-rich tracts occupy residues 486 to 512, 534 to 548, 572 to 586, 593 to 604, 610 to 686, and 693 to 776; these read VIEK…KEEN, DETK…KEES, TVEK…SKSE, TSEKKVEDKSAN, KEPK…EVKA, and DESK…KSVD. Positions 794-803 are enriched in low complexity; the sequence is EETSATTEAQ. Basic and acidic residues-rich tracts occupy residues 804-838 and 849-908; these read ATKE…DAKS and KEMK…ETKG. The span at 909 to 919 shows a compositional bias: low complexity; that stretch reads VEATTAGPVEE. Positions 920 to 935 are enriched in acidic residues; that stretch reads VAVEATEEDVAMEAES. 3 stretches are compositionally biased toward basic and acidic residues: residues 937-957, 1001-1028, and 1035-1047; these read DAVK…KLDS, DEVK…EADS, and NHDE…KEND. The span at 1048 to 1083 shows a compositional bias: low complexity; the sequence is TSASNIEEASSATTTTTNGTSTESDSSSTTPSSETV.

The protein belongs to the HAD-like hydrolase superfamily. MasA/MtnC family. As to quaternary structure, monomer. Mg(2+) is required as a cofactor.

The protein resides in the cytoplasm. It is found in the nucleus. It catalyses the reaction 5-methylsulfanyl-2,3-dioxopentyl phosphate + H2O = 1,2-dihydroxy-5-(methylsulfanyl)pent-1-en-3-one + phosphate. Its pathway is amino-acid biosynthesis; L-methionine biosynthesis via salvage pathway; L-methionine from S-methyl-5-thio-alpha-D-ribose 1-phosphate: step 3/6. The protein operates within amino-acid biosynthesis; L-methionine biosynthesis via salvage pathway; L-methionine from S-methyl-5-thio-alpha-D-ribose 1-phosphate: step 4/6. Functionally, bifunctional enzyme that catalyzes the enolization of 2,3-diketo-5-methylthiopentyl-1-phosphate (DK-MTP-1-P) into the intermediate 2-hydroxy-3-keto-5-methylthiopentenyl-1-phosphate (HK-MTPenyl-1-P), which is then dephosphorylated to form the acireductone 1,2-dihydroxy-3-keto-5-methylthiopentene (DHK-MTPene). In Aedes aegypti (Yellowfever mosquito), this protein is Enolase-phosphatase E1.